Here is a 321-residue protein sequence, read N- to C-terminus: uncharacterized protein (321 aa).

At Val2 the chain carries N-acetylvaline. Residues 37 to 63 (SEASRLLTPQTSSNHALSKMQKDDDIR) form a disordered region. Over residues 43–52 (LTPQTSSNHA) the composition is skewed to polar residues. Thr44 carries the phosphothreonine modification. Phosphoserine is present on residues Ser49, Ser69, Ser121, Ser126, Ser129, Ser137, and Ser139. 2 disordered regions span residues 115–270 (KKQR…YSIS) and 283–321 (ETLEEEQEDAEKEGVLMEDEGNEEYTKDLEEAANKAQPQ). 3 stretches are compositionally biased toward polar residues: residues 120–145 (KSINSESFSSPSLRASKSNSLITSTD), 153–162 (KYSSSGTPEN), and 178–189 (SYGQMIKNNSNR). At Thr159 the chain carries Phosphothreonine. A compositionally biased stretch (basic and acidic residues) spans 204–229 (EIDHTAPEKSEKRQERSGRSFDRQKS). Over residues 237–253 (LSRSISRGPTKNKTVSP) the composition is skewed to polar residues. Ser238, Ser240, Ser242, and Ser270 each carry phosphoserine. Positions 284 to 305 (TLEEEQEDAEKEGVLMEDEGNE) are enriched in acidic residues. The span at 306 to 315 (EYTKDLEEAA) shows a compositional bias: basic and acidic residues.

Its subcellular location is the cytoplasm. This is an uncharacterized protein from Saccharomyces cerevisiae (strain ATCC 204508 / S288c) (Baker's yeast).